Consider the following 289-residue polypeptide: ATP synthase gamma chain (289 aa).

The protein belongs to the ATPase gamma chain family. As to quaternary structure, F-type ATPases have 2 components, CF(1) - the catalytic core - and CF(0) - the membrane proton channel. CF(1) has five subunits: alpha(3), beta(3), gamma(1), delta(1), epsilon(1). CF(0) has three main subunits: a, b and c.

It localises to the cell inner membrane. Its function is as follows. Produces ATP from ADP in the presence of a proton gradient across the membrane. The gamma chain is believed to be important in regulating ATPase activity and the flow of protons through the CF(0) complex. The chain is ATP synthase gamma chain from Cereibacter sphaeroides (strain ATCC 17025 / ATH 2.4.3) (Rhodobacter sphaeroides).